The chain runs to 874 residues: Alanine--tRNA ligase (874 aa).

His563, His567, Cys665, and His669 together coordinate Zn(2+).

The protein belongs to the class-II aminoacyl-tRNA synthetase family. The cofactor is Zn(2+).

The protein resides in the cytoplasm. The enzyme catalyses tRNA(Ala) + L-alanine + ATP = L-alanyl-tRNA(Ala) + AMP + diphosphate. In terms of biological role, catalyzes the attachment of alanine to tRNA(Ala) in a two-step reaction: alanine is first activated by ATP to form Ala-AMP and then transferred to the acceptor end of tRNA(Ala). Also edits incorrectly charged Ser-tRNA(Ala) and Gly-tRNA(Ala) via its editing domain. This is Alanine--tRNA ligase from Actinobacillus pleuropneumoniae serotype 3 (strain JL03).